Consider the following 339-residue polypeptide: DNA-directed RNA polymerase subunit alpha (339 aa).

The tract at residues 1-233 (MVREEVAGST…DLFLPFLHAE (233 aa)) is alpha N-terminal domain (alpha-NTD). The alpha C-terminal domain (alpha-CTD) stretch occupies residues 264 to 339 (KKGIPLNCIF…IDLLKNKLSF (76 aa)).

It belongs to the RNA polymerase alpha chain family. In plastids the minimal PEP RNA polymerase catalytic core is composed of four subunits: alpha, beta, beta', and beta''. When a (nuclear-encoded) sigma factor is associated with the core the holoenzyme is formed, which can initiate transcription.

It localises to the plastid. The protein resides in the chloroplast. The catalysed reaction is RNA(n) + a ribonucleoside 5'-triphosphate = RNA(n+1) + diphosphate. In terms of biological role, DNA-dependent RNA polymerase catalyzes the transcription of DNA into RNA using the four ribonucleoside triphosphates as substrates. In Psathyrostachys stoloniformis, this protein is DNA-directed RNA polymerase subunit alpha.